A 165-amino-acid chain; its full sequence is MTLEEFSAAEQKTERMDTVGDALEEVLSKARSQRTITVGVYEAAKLLNVDPDNVVLCLLAADEDDDRDVALQIHFTLIRAFCCENDINILRVSNPGRLAELLLLENDAGPAESGGAAQTPDLHCVLVTNPHSSQWKDPALSQLICFCRESRYMDQWVPVINLPER.

T2 bears the Phosphothreonine mark.

It belongs to the GADD45 family. As to quaternary structure, interacts with AURKA, GADD45GIP1 and PCNA. Interacts with MAPK14.

It is found in the nucleus. In terms of biological role, might affect PCNA interaction with some CDK (cell division protein kinase) complexes; stimulates DNA excision repair in vitro and inhibits entry of cells into S phase. In T-cells, functions as a regulator of p38 MAPKs by inhibiting p88 phosphorylation and activity. In Mus musculus (Mouse), this protein is Growth arrest and DNA damage-inducible protein GADD45 alpha (Gadd45a).